A 145-amino-acid chain; its full sequence is Maximins 5/H4 type 2 (145 aa).

A signal peptide spans 1–18 (MNFKYIVAVSFLIASAYA). 2 consecutive propeptides follow at residues 19-43 (RSVQNDEQSLSQRDVLEEESLREIR) and 74-124 (TAEE…KEKR). L144 carries the post-translational modification Leucine amide.

Belongs to the bombinin family. As to expression, expressed by the skin glands.

The protein resides in the secreted. Its function is as follows. Maximin-5 shows antibacterial activity against both Gram-positive and Gram-negative bacteria. The only exception is the resistance of E.coli. Also shows antimicrobial activity against fungi C.albicans, A.flavus and P.uticale. It has little hemolytic activity. It does not possess a significant cytotoxicity against tumor cell lines. It does not possess a significant anti-HIV activity. Functionally, maximin-H4 shows antibacterial activity against both Gram-positive and Gram-negative bacteria. It also shows antimicrobial activity against the fungus C.albicans. Shows strong hemolytic activity. The chain is Maximins 5/H4 type 2 from Bombina maxima (Giant fire-bellied toad).